Reading from the N-terminus, the 65-residue chain is VVYTDCTESGQNLCLCQDSNVCGQGNKCILGSNGEKNQCVTGEGTPKPQSHNDGDFEEIPEEYLQ.

The interaction with thrombin active site stretch occupies residues 1 to 3 (VVY). 3 disulfides stabilise this stretch: C6–C14, C16–C28, and C22–C39. The interval 40 to 65 (VTGEGTPKPQSHNDGDFEEIPEEYLQ) is disordered. The O-linked (GalNAc...) threonine glycan is linked to T45. Residues 55-65 (DFEEIPEEYLQ) form an interaction with fibrinogen-binding exosite of thrombin region. The span at 55–65 (DFEEIPEEYLQ) shows a compositional bias: acidic residues. Y63 carries the post-translational modification Sulfotyrosine.

Belongs to the protease inhibitor I14 (hirudin) family.

The protein localises to the secreted. In terms of biological role, hirudin is a potent thrombin-specific protease inhibitor. It forms a stable non-covalent complex with alpha-thrombin, thereby abolishing its ability to cleave fibrinogen. This chain is Hirudin-3B, found in Hirudo medicinalis (Medicinal leech).